The primary structure comprises 291 residues: N-acetylmannosamine kinase (291 aa).

Residues 5–12 and 132–139 each bind ATP; these read AIDIGGTK and GVGGGVVC. Zn(2+) contacts are provided by histidine 156, cysteine 166, cysteine 168, and cysteine 173.

Belongs to the ROK (NagC/XylR) family. NanK subfamily. In terms of assembly, homodimer.

The catalysed reaction is an N-acyl-D-mannosamine + ATP = an N-acyl-D-mannosamine 6-phosphate + ADP + H(+). It functions in the pathway amino-sugar metabolism; N-acetylneuraminate degradation; D-fructose 6-phosphate from N-acetylneuraminate: step 2/5. Its function is as follows. Catalyzes the phosphorylation of N-acetylmannosamine (ManNAc) to ManNAc-6-P. In Salmonella gallinarum (strain 287/91 / NCTC 13346), this protein is N-acetylmannosamine kinase.